The primary structure comprises 442 residues: Enolase 1 (442 aa).

The segment at 73-140 (KLIAKEIVGY…YNYLGGFNAH (68 aa)) is binds human collagen. Position 163 (Gln163) interacts with (2R)-2-phosphoglycerate. Glu205 (proton donor) is an active-site residue. Mg(2+) contacts are provided by Asp242, Glu290, and Asp317. The (2R)-2-phosphoglycerate site is built by Lys342, Arg371, Ser372, and Lys393. Catalysis depends on Lys342, which acts as the Proton acceptor.

Belongs to the enolase family. The cofactor is Mg(2+).

It localises to the cytoplasm. It is found in the secreted. Its subcellular location is the cell surface. It catalyses the reaction (2R)-2-phosphoglycerate = phosphoenolpyruvate + H2O. Its pathway is carbohydrate degradation; glycolysis; pyruvate from D-glyceraldehyde 3-phosphate: step 4/5. In terms of biological role, catalyzes the reversible conversion of 2-phosphoglycerate (2-PG) into phosphoenolpyruvate (PEP). It is essential for the degradation of carbohydrates via glycolysis. Functionally, 'Moonlights' as a collagen receptor. Binds host (human) collagen, which may contribute to pathogenicity. This chain is Enolase 1, found in Lactiplantibacillus plantarum (strain ATCC BAA-793 / NCIMB 8826 / WCFS1) (Lactobacillus plantarum).